Reading from the N-terminus, the 194-residue chain is Orotate phosphoribosyltransferase (194 aa).

116-124 (EDIVTTGLS) provides a ligand contact to 5-phospho-alpha-D-ribose 1-diphosphate. Residues threonine 120 and arginine 148 each coordinate orotate.

It belongs to the purine/pyrimidine phosphoribosyltransferase family. PyrE subfamily. In terms of assembly, homodimer. It depends on Mg(2+) as a cofactor.

The catalysed reaction is orotidine 5'-phosphate + diphosphate = orotate + 5-phospho-alpha-D-ribose 1-diphosphate. It participates in pyrimidine metabolism; UMP biosynthesis via de novo pathway; UMP from orotate: step 1/2. In terms of biological role, catalyzes the transfer of a ribosyl phosphate group from 5-phosphoribose 1-diphosphate to orotate, leading to the formation of orotidine monophosphate (OMP). The sequence is that of Orotate phosphoribosyltransferase from Caulobacter vibrioides (strain ATCC 19089 / CIP 103742 / CB 15) (Caulobacter crescentus).